The chain runs to 788 residues: uncharacterized protein (788 aa).

The region spanning 485 to 693 (EMITTAWIKL…IYIVLKSYKG (209 aa)) is the Adrift-type SAM-dependent 2'-O-MTase domain. Positions 521 and 604 each coordinate S-adenosyl-L-methionine. Lys-645 functions as the Proton acceptor in the catalytic mechanism.

This is an uncharacterized protein from Acanthamoeba polyphaga (Amoeba).